Reading from the N-terminus, the 303-residue chain is tRNA dimethylallyltransferase (303 aa).

12-19 (GPTGVGKT) provides a ligand contact to ATP. 14–19 (TGVGKT) contributes to the substrate binding site. The tract at residues 37 to 40 (DSAQ) is interaction with substrate tRNA.

It belongs to the IPP transferase family. In terms of assembly, monomer. Mg(2+) serves as cofactor.

The catalysed reaction is adenosine(37) in tRNA + dimethylallyl diphosphate = N(6)-dimethylallyladenosine(37) in tRNA + diphosphate. Catalyzes the transfer of a dimethylallyl group onto the adenine at position 37 in tRNAs that read codons beginning with uridine, leading to the formation of N6-(dimethylallyl)adenosine (i(6)A). The sequence is that of tRNA dimethylallyltransferase from Fusobacterium nucleatum subsp. nucleatum (strain ATCC 25586 / DSM 15643 / BCRC 10681 / CIP 101130 / JCM 8532 / KCTC 2640 / LMG 13131 / VPI 4355).